Reading from the N-terminus, the 60-residue chain is Small, acid-soluble spore protein 1 (60 aa).

This sequence belongs to the alpha/beta-type SASP family. SASP are degraded in the first minutes of spore germination and provide amino acids for both new protein synthesis and metabolism.

Its function is as follows. SASP are bound to spore DNA. They are double-stranded DNA-binding proteins that cause DNA to change to an a-like conformation. They protect the DNA backbone from chemical and enzymatic cleavage and are thus involved in dormant spore's high resistance to UV light. The sequence is that of Small, acid-soluble spore protein 1 (ssp1) from Clostridium perfringens (strain 13 / Type A).